A 652-amino-acid chain; its full sequence is DNA ligase (652 aa).

NAD(+) contacts are provided by residues Asp29 to Asp33, Ser78 to Leu79, and Glu107. Catalysis depends on Lys109, which acts as the N6-AMP-lysine intermediate. The NAD(+) site is built by Arg130, Glu164, Lys278, and Lys302. Cys395, Cys398, Cys413, and Cys418 together coordinate Zn(2+). The BRCT domain occupies Val577–Leu652.

This sequence belongs to the NAD-dependent DNA ligase family. LigA subfamily. The cofactor is Mg(2+). Requires Mn(2+) as cofactor.

The enzyme catalyses NAD(+) + (deoxyribonucleotide)n-3'-hydroxyl + 5'-phospho-(deoxyribonucleotide)m = (deoxyribonucleotide)n+m + AMP + beta-nicotinamide D-nucleotide.. DNA ligase that catalyzes the formation of phosphodiester linkages between 5'-phosphoryl and 3'-hydroxyl groups in double-stranded DNA using NAD as a coenzyme and as the energy source for the reaction. It is essential for DNA replication and repair of damaged DNA. In Streptococcus pneumoniae (strain CGSP14), this protein is DNA ligase.